The primary structure comprises 1653 residues: Clathrin heavy chain (1653 aa).

The globular terminal domain stretch occupies residues 1–483; it reads MSDLPIEFTE…FDTTLALACY (483 aa). WD40-like repeat stretches follow at residues 23–66, 67–107, 108–152, 153–198, 199–263, 264–307, and 308–336; these read FLDF…KNMG, GDSA…LDEP, VIFW…ANLN, NTQI…QAID, GHVA…PDAT, NDFP…ITAE, and SVFTAAPYNHENGIACINKKGQVLAVEIS. The tract at residues 453 to 469 is binding site for the uncoating ATPase, involved in lattice disassembly; sequence EKWLKEDKLECSEELGD. The segment at 484–527 is flexible linker; that stretch reads LRAGAHAKVISCLAELQQFEKIIPYCQKVGYQPNFLVLISSLIR. The tract at residues 528–1653 is heavy chain arm; it reads SSPDRASEFA…SAMNVQPTGF (1126 aa). CHCR repeat units follow at residues 543 to 689, 692 to 834, 839 to 978, 985 to 1130, 1134 to 1275, 1280 to 1426, and 1429 to 1572; these read NPET…QTVV, ATKF…DEAF, LQSV…QLID, IPEL…IPDA, YIKA…FKLA, LNLI…SLLV, and LTSL…REGF. Lys1107 participates in a covalent cross-link: Glycyl lysine isopeptide (Lys-Gly) (interchain with G-Cter in ubiquitin). Positions 1219–1528 are involved in binding clathrin light chain; it reads AARLCYSAVS…LLYRRNKKWA (310 aa).

The protein belongs to the clathrin heavy chain family. Clathrin triskelions, composed of 3 heavy chains and 3 light chains, are the basic subunits of the clathrin coat. Interacts with the auxilin-like clathrin uncoating factor SWA2. Interacts with INP53.

The protein resides in the cytoplasmic vesicle membrane. It localises to the membrane. The protein localises to the coated pit. Clathrin is the major protein of the polyhedral coat of coated pits and vesicles. In yeast, it is involved in the retention of proteins in an intracellular membrane compartment, presumably the trans-Golgi. The chain is Clathrin heavy chain (CHC1) from Saccharomyces cerevisiae (strain ATCC 204508 / S288c) (Baker's yeast).